A 406-amino-acid polypeptide reads, in one-letter code: MALDGPEQMELEEGKAGSGLRQYYLSKIEELQLIVNDKSQNLRRLQAQRNELNAKVRLLREELQLLQEQGSYVGEVVRAMDKKKVLVKVHPEGKFVVDVDKNIDINDVTPNCRVALRNDSYTLHKILPNKVDPLVSLMMVEKVPDSTYEMIGGLDKQIKEIKEVIELPVKHPELFEALGIAQPKGVLLYGPPGTGKTLLARAVAHHTDCTFIRVSGSELVQKFIGEGARMVRELFVMAREHAPSIIFMDEIDSIGSSRLEGGSGGDSEVQRTMLELLNQLDGFEATKNIKVIMATNRIDILDSALLRPGRIDRKIEFPPPNEEARLDILKIHSRKMNLTRGINLRKIAELMPGASGAEVKGVCTEAGMYALRERRVHVTQEDFEMAVAKVMQKDSEKNMSIKKLWK.

Ala-2 bears the N-acetylalanine mark. A Phosphoserine modification is found at Ser-120. The segment at 186–406 is may mediate interaction with PRPF9; sequence VLLYGPPGTG…KNMSIKKLWK (221 aa). Position 190–197 (190–197) interacts with ATP; sequence GPPGTGKT. The residue at position 222 (Lys-222) is an N6-acetyllysine.

It belongs to the AAA ATPase family. Component of the 19S proteasome regulatory particle complex. The 26S proteasome consists of a 20S core particle (CP) and two 19S regulatory subunits (RP). The regulatory particle is made of a lid composed of 9 subunits, a base containing 6 ATPases including PSMC5 and few additional components. Component of a complex with USP49 and RUVBL1. Interacts with PRPF19. Interacts with TRIM5. Interacts with NDC80. Interacts with PAAF1. Interacts, in vitro, with the thyroid hormone receptor (in a thyroid hormone T3-dependent manner) and with retinoid X receptor (RXR). Interacts with ERCC6.

The protein resides in the cytoplasm. The protein localises to the nucleus. Its function is as follows. Component of the 26S proteasome, a multiprotein complex involved in the ATP-dependent degradation of ubiquitinated proteins. This complex plays a key role in the maintenance of protein homeostasis by removing misfolded or damaged proteins, which could impair cellular functions, and by removing proteins whose functions are no longer required. Therefore, the proteasome participates in numerous cellular processes, including cell cycle progression, apoptosis, or DNA damage repair. PSMC5 belongs to the heterohexameric ring of AAA (ATPases associated with diverse cellular activities) proteins that unfolds ubiquitinated target proteins that are concurrently translocated into a proteolytic chamber and degraded into peptides. This chain is 26S proteasome regulatory subunit 8 (PSMC5), found in Bos taurus (Bovine).